Here is a 30-residue protein sequence, read N- to C-terminus: Phospholipase A2 acanmyotoxin-2 (30 aa).

Residues tyrosine 28 and glycine 30 each coordinate Ca(2+).

Ca(2+) serves as cofactor. Contains seven disulfide bonds. In terms of tissue distribution, expressed by the venom gland.

It is found in the secreted. It carries out the reaction a 1,2-diacyl-sn-glycero-3-phosphocholine + H2O = a 1-acyl-sn-glycero-3-phosphocholine + a fatty acid + H(+). Functionally, snake venom phospholipase A2 (PLA2) that has myotoxic activity but no significant neurotoxicity. PLA2 catalyzes the calcium-dependent hydrolysis of the 2-acyl groups in 3-sn-phosphoglycerides. The polypeptide is Phospholipase A2 acanmyotoxin-2 (Acanthophis sp. (strain Seram) (Seram death adder)).